The sequence spans 311 residues: Ribosomal protein L11 methyltransferase (311 aa).

The S-adenosyl-L-methionine site is built by Thr-160, Gly-181, Asp-203, and Asn-246.

The protein belongs to the methyltransferase superfamily. PrmA family.

It is found in the cytoplasm. It carries out the reaction L-lysyl-[protein] + 3 S-adenosyl-L-methionine = N(6),N(6),N(6)-trimethyl-L-lysyl-[protein] + 3 S-adenosyl-L-homocysteine + 3 H(+). Its function is as follows. Methylates ribosomal protein L11. The sequence is that of Ribosomal protein L11 methyltransferase from Macrococcus caseolyticus (strain JCSC5402) (Macrococcoides caseolyticum).